A 187-amino-acid chain; its full sequence is Elongation factor P 1 (187 aa).

This sequence belongs to the elongation factor P family.

Its subcellular location is the cytoplasm. It functions in the pathway protein biosynthesis; polypeptide chain elongation. Functionally, involved in peptide bond synthesis. Stimulates efficient translation and peptide-bond synthesis on native or reconstituted 70S ribosomes in vitro. Probably functions indirectly by altering the affinity of the ribosome for aminoacyl-tRNA, thus increasing their reactivity as acceptors for peptidyl transferase. The chain is Elongation factor P 1 from Geobacter sulfurreducens (strain ATCC 51573 / DSM 12127 / PCA).